A 982-amino-acid polypeptide reads, in one-letter code: Nitrate reductase [NADPH] (982 aa).

The interval 1–128 is disordered; the sequence is MEAPALEQRQ…PPSTRLTTIL (128 aa). The segment covering 10–20 has biased composition (basic and acidic residues); that stretch reads QSLHDSSERQQ. A compositionally biased stretch (low complexity) spans 63 to 110; the sequence is TASPTTTDFSSSSSDDNSTTLETSVNYSHSSNTNTNTSCPPSPITSSS. Cys-240 is a binding site for Mo-molybdopterin. Residues 617–692 form the Cytochrome b5 heme-binding domain; that stretch reads TRLITLEELR…MPTYHIGTLT (76 aa). His-652 and His-675 together coordinate heme. The FAD-binding FR-type domain maps to 721 to 836; that stretch reads KTWNSAILTF…KGPVGKFVYQ (116 aa). FAD is bound by residues 776–779, 794–798, 810–812, Ser-860, and Thr-863; these read RAYT, LVKIY, and QMT. Residue 952–961 coordinates NADP(+); the sequence is MVLLCGPEGM.

It belongs to the nitrate reductase family. Homodimer. FAD is required as a cofactor. The cofactor is heme. It depends on Mo-molybdopterin as a cofactor.

The enzyme catalyses nitrite + NADP(+) + H2O = nitrate + NADPH + H(+). The protein operates within nitrogen metabolism; nitrate reduction (assimilation). Its function is as follows. Nitrate reductase is a key enzyme involved in the first step of nitrate assimilation in plants, fungi and bacteria. The polypeptide is Nitrate reductase [NADPH] (nit-3) (Neurospora crassa (strain ATCC 24698 / 74-OR23-1A / CBS 708.71 / DSM 1257 / FGSC 987)).